The chain runs to 798 residues: MTDRVTHRVSLDDLNLEKQKFDSKDDIKPWLQDNLQSTKGINVVIERSDTSKIIFKCKNKEKKTKIVESKKTASKTMIRKHTSCPFKIRANYSVRNKVWTLSIVSDEHDHVVDLPRSFVGKNLISNTIPGSSLNVLDSVAPRSNKKGIKPTSEIANTPSVTSYSPSCAVKRNEDVDAPKISSKKARNLTKKPSTQSTRSSSSSDGSSIVSFGSLTSQSSSTSLPENYKGQVPTSMDSMVVEESLTGKSLKPAASHPVKRKNMKANTMKKSKKLKQNPIVVSPIEEDSNLNSFDDANIDLQRQQSLQSPLSHLVQNQDPISLEQNPQLHTVYPQPRHSKQSSSLLKKNQQQDRIPDNMPLQPQENNRTLQNFPLNQFNANEILQNVQQVVRETVKSEILDSPNIDNTYKTDMMDSFVSSVILDYKDYLSSQFLFSLKQNLYDRREATHTNVDLEQNGSNENLFDEQPQHKHNHQHNENQFSYQSQIQNQRQNQNQNQGQNQNQNQSQSQTPGQNSNQNDSQTQIPLQSQTPQDRKSAMQQNWLPGSTPGVGGLIRLSPLLNDNDNNEYAAVAAAAVVGSTPGNPNGNSLENFTHLPGINSSTLNYLMQLPHPSANPNSGGVSSSQPASLMSLQGHQGLLQQQQQQQPMFSMQNSGQQLPPLSSIPKLPSSNNANVNLNSSSTLPLPLNNTGPTLNPSSLLKSTSRNSTNSGNINVNNINNSNNNSNSAFNSVFLNSSITTNPAFIFNSQGNPTNSNQSMVNSIMTTNSNKDGTATSNNNSSGNTSNNLLNDMPNYGPGW.

Disordered stretches follow at residues 142–274 (RSNK…KKLK), 331–365 (YPQP…QENN), 449–545 (NVDL…LPGS), 642–718 (QQQQ…NNIN), and 748–798 (QGNP…GPGW). The segment covering 153-165 (EIANTPSVTSYSP) has biased composition (polar residues). The span at 193–223 (STQSTRSSSSSDGSSIVSFGSLTSQSSSTSL) shows a compositional bias: low complexity. A compositionally biased stretch (basic residues) spans 256-274 (PVKRKNMKANTMKKSKKLK). Residues 449–460 (NVDLEQNGSNEN) show a composition bias toward polar residues. Residues 476 to 517 (ENQFSYQSQIQNQRQNQNQNQGQNQNQNQSQSQTPGQNSNQN) are compositionally biased toward low complexity. 2 stretches are compositionally biased toward polar residues: residues 518–543 (DSQT…NWLP) and 646–656 (PMFSMQNSGQQ). 2 stretches are compositionally biased toward low complexity: residues 657–695 (LPPL…TLNP) and 705–718 (NSTN…NNIN). The segment covering 748-773 (QGNPTNSNQSMVNSIMTTNSNKDGTA) has biased composition (polar residues). Residues 774-789 (TSNNNSSGNTSNNLLN) show a composition bias toward low complexity.

The protein localises to the nucleus. Its function is as follows. Transcription factor involved in iron metabolism, oxidative stress, surface adhesion, hyphal development and virulence. Functions as a negative regulator of MRS4 expression through the CACCC AFT-type sequence in a gene dose-dependent fashion. Acts as a repressor in flocculation, plastic adhesion, and surface hydrophobicity. This Candida albicans (strain SC5314 / ATCC MYA-2876) (Yeast) protein is Iron-regulated transcriptional activator AFT2 (AFT2).